The following is a 207-amino-acid chain: Thiamine-phosphate synthase (207 aa).

4-amino-2-methyl-5-(diphosphooxymethyl)pyrimidine is bound by residues 37 to 41 (QYRDK) and asparagine 69. Mg(2+) is bound by residues aspartate 70 and aspartate 89. Serine 108 lines the 4-amino-2-methyl-5-(diphosphooxymethyl)pyrimidine pocket. 135-137 (SRT) is a 2-[(2R,5Z)-2-carboxy-4-methylthiazol-5(2H)-ylidene]ethyl phosphate binding site. Position 138 (lysine 138) interacts with 4-amino-2-methyl-5-(diphosphooxymethyl)pyrimidine. Glycine 164 contacts 2-[(2R,5Z)-2-carboxy-4-methylthiazol-5(2H)-ylidene]ethyl phosphate.

The protein belongs to the thiamine-phosphate synthase family. It depends on Mg(2+) as a cofactor.

The catalysed reaction is 2-[(2R,5Z)-2-carboxy-4-methylthiazol-5(2H)-ylidene]ethyl phosphate + 4-amino-2-methyl-5-(diphosphooxymethyl)pyrimidine + 2 H(+) = thiamine phosphate + CO2 + diphosphate. It carries out the reaction 2-(2-carboxy-4-methylthiazol-5-yl)ethyl phosphate + 4-amino-2-methyl-5-(diphosphooxymethyl)pyrimidine + 2 H(+) = thiamine phosphate + CO2 + diphosphate. It catalyses the reaction 4-methyl-5-(2-phosphooxyethyl)-thiazole + 4-amino-2-methyl-5-(diphosphooxymethyl)pyrimidine + H(+) = thiamine phosphate + diphosphate. It functions in the pathway cofactor biosynthesis; thiamine diphosphate biosynthesis; thiamine phosphate from 4-amino-2-methyl-5-diphosphomethylpyrimidine and 4-methyl-5-(2-phosphoethyl)-thiazole: step 1/1. Condenses 4-methyl-5-(beta-hydroxyethyl)thiazole monophosphate (THZ-P) and 2-methyl-4-amino-5-hydroxymethyl pyrimidine pyrophosphate (HMP-PP) to form thiamine monophosphate (TMP). This is Thiamine-phosphate synthase from Chromobacterium violaceum (strain ATCC 12472 / DSM 30191 / JCM 1249 / CCUG 213 / NBRC 12614 / NCIMB 9131 / NCTC 9757 / MK).